A 1005-amino-acid chain; its full sequence is Negative regulator of pleiotropic drug resistance STB5 (1005 aa).

The segment at 1–28 (MSGPDKGSDSGQTANDPKQKKARNGQME) is disordered. The segment at residues 32–59 (CARCRKLKKKCPRQLPECSNCLKAREPC) is a DNA-binding region (zn(2)-C6 fungal-type). Disordered regions lie at residues 129–151 (GGEQQYNNGPPISGIDGNDSINR), 666–693 (KGKSRSSKRFEKSKESDSDRGVTEEDVK), and 763–831 (TKPT…SSLR). Residues 673–693 (KRFEKSKESDSDRGVTEEDVK) are compositionally biased toward basic and acidic residues. A compositionally biased stretch (polar residues) spans 763 to 773 (TKPTANIMNDQ). The span at 792–801 (EGPKSLKEGN) shows a compositional bias: basic and acidic residues.

The protein resides in the nucleus. Functionally, transcription factor that negatively regulates pleiotropic drug resistance genes, including the ABC transporter genes CDR1, PDH1, and YOR1. This chain is Negative regulator of pleiotropic drug resistance STB5, found in Candida glabrata (strain ATCC 2001 / BCRC 20586 / JCM 3761 / NBRC 0622 / NRRL Y-65 / CBS 138) (Yeast).